Consider the following 545-residue polypeptide: E3 ubiquitin-protein ligase ipaH9.8 (545 aa).

An interaction with target proteins region spans residues 1–242; it reads MLPINNNFSL…YHGPRIYFSM (242 aa). 8 LRR repeats span residues 57-77, 78-99, 100-117, 118-139, 140-157, 158-179, 182-203, and 205-228; these read NSDE…NLPA, QITL…PVTL, KKLY…VLPP, ALES…PDSL, LTMN…SLPQ, ALKN…SEGN, VVRE…ILNL, and NECS…QRLT. Residues 243 to 250 are linker; the sequence is SDGQQNTL. The tract at residues 251-545 is E3 ubiquitin-protein ligase catalytic domain; sequence HRPLADAVTA…PENGSQLHHS (295 aa). One can recognise an NEL domain in the interval 253 to 545; the sequence is PLADAVTAWF…PENGSQLHHS (293 aa). The active-site Glycyl thioester intermediate is Cys337.

Belongs to the LRR-containing bacterial E3 ligase family. In terms of assembly, also interacts with human and mouse U2AF1 (U2AF35). Autoubiquitinated (in vitro). Ubiquitinated in the presence of host E1 ubiquitin-activating enzyme, E2 ubiquitin-conjugating enzyme and ubiquitin.

The protein resides in the secreted. Its subcellular location is the host cytoplasm. It is found in the host nucleus. It catalyses the reaction S-ubiquitinyl-[E2 ubiquitin-conjugating enzyme]-L-cysteine + [acceptor protein]-L-lysine = [E2 ubiquitin-conjugating enzyme]-L-cysteine + N(6)-ubiquitinyl-[acceptor protein]-L-lysine.. It functions in the pathway protein modification; protein ubiquitination. Exists in an autoinhibited state in the absence of substrate protein, due to interactions of the leucine-rich repeats with NEL domain. Is activated upon binding to a substrate protein. Its function is as follows. Effector E3 ubiquitin ligase that interferes with host's ubiquitination pathway and modulates the acute inflammatory responses, thus facilitating bacterial colonization within the host cell. Interacts with IKBKG (NEMO) and TNIP1 (ABIN-1), a ubiquitin-binding adapter protein, which results in TNIP1-dependent 'Lys-27'-linked polyubiquitination of IKBKG. Consequently, polyubiquitinated IKBKG undergoes proteasome-dependent degradation, which perturbs NF-kappa-B activation during bacterial infection. Mediates polyubiquitination of host U2AF1, leading to its proteasomal degradation. Catalyzes 'Lys-48'-linked polyubiquitination and subsequent degradation of a subset of host guanylate-binding proteins (GBP1, GBP2, GBP4 and GBP6), thereby suppressing host cell defense. In contrast, host GBP3 and GBP7 are not ubiquitinated by IpaH9.8. Uses UBE2D2 (UBCH5B) as an E2 ubiquitin-conjugating enzyme. In Shigella flexneri, this protein is E3 ubiquitin-protein ligase ipaH9.8.